A 202-amino-acid polypeptide reads, in one-letter code: Small ribosomal subunit protein uS5 (202 aa).

The segment covering 1–13 has biased composition (gly residues); sequence MPGQQRRGGGSGG. A disordered region spans residues 1–31; the sequence is MPGQQRRGGGSGGSDRRERRDRSGSGPAQEK. Residues 14–23 are compositionally biased toward basic and acidic residues; the sequence is SDRRERRDRS. An S5 DRBM domain is found at 34–97; sequence YVERVVAINR…EEAKKHFFKV (64 aa).

This sequence belongs to the universal ribosomal protein uS5 family. In terms of assembly, part of the 30S ribosomal subunit. Contacts proteins S4 and S8.

With S4 and S12 plays an important role in translational accuracy. In terms of biological role, located at the back of the 30S subunit body where it stabilizes the conformation of the head with respect to the body. This is Small ribosomal subunit protein uS5 from Frankia casuarinae (strain DSM 45818 / CECT 9043 / HFP020203 / CcI3).